An 88-amino-acid polypeptide reads, in one-letter code: Small ribosomal subunit protein bS20 (88 aa).

The tract at residues Lys69–Gly88 is disordered. Residues Thr71–Gly88 show a composition bias toward basic residues.

It belongs to the bacterial ribosomal protein bS20 family.

In terms of biological role, binds directly to 16S ribosomal RNA. The protein is Small ribosomal subunit protein bS20 of Pelotomaculum thermopropionicum (strain DSM 13744 / JCM 10971 / SI).